A 418-amino-acid polypeptide reads, in one-letter code: Gamma-glutamyl phosphate reductase (418 aa).

Belongs to the gamma-glutamyl phosphate reductase family.

It is found in the cytoplasm. It catalyses the reaction L-glutamate 5-semialdehyde + phosphate + NADP(+) = L-glutamyl 5-phosphate + NADPH + H(+). It functions in the pathway amino-acid biosynthesis; L-proline biosynthesis; L-glutamate 5-semialdehyde from L-glutamate: step 2/2. In terms of biological role, catalyzes the NADPH-dependent reduction of L-glutamate 5-phosphate into L-glutamate 5-semialdehyde and phosphate. The product spontaneously undergoes cyclization to form 1-pyrroline-5-carboxylate. This is Gamma-glutamyl phosphate reductase from Geobacter sp. (strain M21).